Reading from the N-terminus, the 1118-residue chain is MHWIATRNAVVSFPKWRFFFRSSYRTYSSLKPSSPILLNRRYSEGISCLRDGKSLKRITTASKKVKTSSDVLTDKDLSHLVWWKERLQTCKKPSTLQLIERLMYTNLLGLDPSLRNGSLKDGNLNWEMLQFKSRFPREVLLCRVGEFYEAIGIDACILVEYAGLNPFGGLRSDSIPKAGCPIMNLRQTLDDLTRNGYSVCIVEEVQGPTPARSRKGRFISGHAHPGSPYVYGLVGVDHDLDFPDPMPVVGISRSARGYCMISIFETMKAYSLDDGLTEEALVTKLRTRRCHHLFLHASLRHNASGTCRWGEFGEGGLLWGECSSRNFEWFEGDTLSELLSRVKDVYGLDDEVSFRNVNVPSKNRPRPLHLGTATQIGALPTEGIPCLLKVLLPSTCSGLPSLYVRDLLLNPPAYDIALKIQETCKLMSTVTCSIPEFTCVSSAKLVKLLEQREANYIEFCRIKNVLDDVLHMHRHAELVEILKLLMDPTWVATGLKIDFDTFVNECHWASDTIGEMISLDENESHQNVSKCDNVPNEFFYDMESSWRGRVKGIHIEEEITQVEKSAEALSLAVAEDFHPIISRIKATTASLGGPKGEIAYAREHESVWFKGKRFTPSIWAGTAGEDQIKQLKPALDSKGKKVGEEWFTTPKVEIALVRYHEASENAKARVLELLRELSVKLQTKINVLVFASMLLVISKALFSHACEGRRRKWVFPTLVGFSLDEGAKPLDGASRMKLTGLSPYWFDVSSGTAVHNTVDMQSLFLLTGPNGGGKSSLLRSICAAALLGISGLMVPAESACIPHFDSIMLHMKSYDSPVDGKSSFQVEMSEIRSIVSQATSRSLVLIDEICRGTETAKGTCIAGSVVESLDTSGCLGIVSTHLHGIFSLPLTAKNITYKAMGAENVEGQTKPTWKLTDGVCRESLAFETAKREGVPESVIQRAEALYLSVYAKDASAEVVKPDQIITSSNNDQQIQKPVSSERSLEKDLAKAIVKICGKKMIEPEAIECLSIGARELPPPSTVGSSCVYVMRRPDKRLYIGQTDDLEGRIRAHRAKEGLQGSSFLYLMVQGKSMACQLETLLINQLHEQGYSLANLADGKHRNFGTSSSLSTSDVVSIL.

Position 768–775 (768–775 (GPNGGGKS)) interacts with ATP.

The protein belongs to the DNA mismatch repair MutS family.

The protein resides in the mitochondrion. The protein localises to the plastid. Its subcellular location is the chloroplast. DNA mismatch repair protein specifically involved in maintenance of mitochondrial genome configuration by controlling specific rearranged portion. Functions by suppressing asymmetric recombination at some repeat pairs. This is DNA mismatch repair protein MSH1, mitochondrial (MSH1) from Arabidopsis thaliana (Mouse-ear cress).